A 258-amino-acid chain; its full sequence is Phosphonates import ATP-binding protein PhnC 1 (258 aa).

In terms of domain architecture, ABC transporter spans 2 to 246; that stretch reads IEFKDVGLVY…TFEEIYGRSI (245 aa). 35–42 is a binding site for ATP; it reads GLSGAGKS.

The protein belongs to the ABC transporter superfamily. Phosphonates importer (TC 3.A.1.9.1) family. As to quaternary structure, the complex is composed of two ATP-binding proteins (PhnC), two transmembrane proteins (PhnE) and a solute-binding protein (PhnD).

It is found in the cell membrane. The enzyme catalyses phosphonate(out) + ATP + H2O = phosphonate(in) + ADP + phosphate + H(+). Functionally, part of the ABC transporter complex PhnCDE involved in phosphonates import. Responsible for energy coupling to the transport system. The sequence is that of Phosphonates import ATP-binding protein PhnC 1 from Oceanobacillus iheyensis (strain DSM 14371 / CIP 107618 / JCM 11309 / KCTC 3954 / HTE831).